Consider the following 573-residue polypeptide: MDAKSLTAWSRTLVTFKDVFVDFTREEWKLLDTAQQIVYRNVMLENYKNLVSLGYQLTKPDVILRLEKGEEPWLVEREIHQETHPDSETAFEIKSSVSSRSIFKDKQSCDIKMEGMARNDLWYLSLEEVWKCRDQLDKYQENPERHLRQVAFTQKKVLTQERVSESGKYGGNCLLPAQLVLREYFHKRDSHTKSLKHDLVLNGHQDSCASNSNECGQTFCQNIHLIQFARTHTGDKSYKCPDNDNSLTHGSSLGISKGIHREKPYECKECGKFFSWRSNLTRHQLIHTGEKPYECKECGKSFSRSSHLIGHQKTHTGEEPYECKECGKSFSWFSHLVTHQRTHTGDKLYTCNQCGKSFVHSSRLIRHQRTHTGEKPYECPECGKSFRQSTHLILHQRTHVRVRPYECNECGKSYSQRSHLVVHHRIHTGLKPFECKDCGKCFSRSSHLYSHQRTHTGEKPYECHDCGKSFSQSSALIVHQRIHTGEKPYECCQCGKAFIRKNDLIKHQRIHVGEETYKCNQCGIIFSQNSPFIVHQIAHTGEQFLTCNQCGTALVNTSNLIGYQTNHIRENAY.

A KRAB domain is found at 14-85 (VTFKDVFVDF…EREIHQETHP (72 aa)). Residues 206 to 232 (DSCASNSNECGQTFCQNIHLIQFARTH) form a C2H2-type 1; atypical zinc finger. 9 C2H2-type zinc fingers span residues 265–287 (YECK…QLIH), 293–315 (YECK…QKTH), 321–343 (YECK…QRTH), 349–371 (YTCN…QRTH), 377–399 (YECP…QRTH), 405–427 (YECN…HRIH), 433–455 (FECK…QRTH), 461–483 (YECH…QRIH), and 489–511 (YECC…QRIH). The C2H2-type 11; atypical zinc finger occupies 517 to 539 (YKCNQCGIIFSQNSPFIVHQIAH).

Belongs to the krueppel C2H2-type zinc-finger protein family. Interacts (via the KRAB domain) with TRIM28 (via the RBCC domain).

It localises to the nucleus. In terms of biological role, may be involved in transcriptional regulation. The chain is Zinc finger protein 10 (ZNF10) from Homo sapiens (Human).